A 416-amino-acid chain; its full sequence is Ena/VASP-like protein (416 aa).

Residues 1-112 (MSEQSICQAR…NAMLFALNIM (112 aa)) form the WH1 domain. The segment covering 114–129 (SQEGGPSSQRQVQNGP) has biased composition (polar residues). Disordered regions lie at residues 114–133 (SQEGGPSSQRQVQNGPSPDE) and 141–369 (VMEQ…PAGS). Serine 130 carries the phosphoserine modification. The segment covering 141–157 (VMEQHQQQRQESLERRT) has biased composition (basic and acidic residues). Residues 169–180 (PSSAASAPVSCS) are compositionally biased toward low complexity. Residues 181 to 206 (GPPPPPPPPVPPPPTGATPPPPPPLP) show a composition bias toward pro residues. The tract at residues 222 to 242 (GLAAAIAGAKLRRVQRPEDAS) is EVH2 block A. The EVH2 stretch occupies residues 222–413 (GLAAAIAGAK…DAIRQELSGI (192 aa)). The KLKR signature appears at 231–234 (KLRR). Low complexity predominate over residues 242–253 (SGGSSPSGTSKS). Phosphoserine occurs at positions 246 and 259. Residues 265–282 (GGLMEEMNKLLAKRRKAA) are EVH2 block B. The segment covering 299-320 (EDPSTSPSPGTRAASQPPNSSE) has biased composition (polar residues). A phosphoserine mark is found at serine 304, serine 306, serine 329, serine 331, serine 341, serine 349, serine 354, and serine 369. The segment covering 321–331 (AGRKPWERSNS) has biased composition (basic and acidic residues). The required for interaction with ZDHHC17 stretch occupies residues 342–362 (RTPSVAKSPEAKSPLQSQPHS). The interval 379–413 (DLDRMKQEILEEVVRELHKVKEEIIDAIRQELSGI) is EVH2 block C.

It belongs to the Ena/VASP family. In terms of assembly, homotetramer. Binds to the SH3 domains of ABL1, LYN and SRC. Also binds to profilin, with preference for isoform IIa of PFN2, and the WW domain of APBB1/FE65. Binds to SEMA6A. Interacts, via the Pro-rich region, with the C-terminal SH3 domain of DNMBP. Interacts with RAPH1. Binds, via the EVH1 domain, the Pro-rich domain of Listeria monocytogenes actA. Binds, via the EVH1 domain, the Pro-rich domain of ZYX. Interacts with FYB1. Interacts with ZDHHC17. Phosphorylated by PKA; phosphorylation abolishes binding to SH3 domains of ABL and SRC.

It localises to the cytoplasm. The protein resides in the cytoskeleton. It is found in the stress fiber. The protein localises to the cell projection. Its subcellular location is the lamellipodium. Functionally, ena/VASP proteins are actin-associated proteins involved in a range of processes dependent on cytoskeleton remodeling and cell polarity such as axon guidance and lamellipodial and filopodial dynamics in migrating cells. EVL enhances actin nucleation and polymerization. This Homo sapiens (Human) protein is Ena/VASP-like protein (EVL).